Consider the following 265-residue polypeptide: 4-hydroxy-tetrahydrodipicolinate reductase (265 aa).

NAD(+)-binding positions include 7 to 12 (GASGRM) and aspartate 33. Arginine 34 serves as a coordination point for NADP(+). NAD(+) is bound by residues 96–98 (GTT) and 120–123 (AANM). Histidine 153 (proton donor/acceptor) is an active-site residue. Residue histidine 154 participates in (S)-2,3,4,5-tetrahydrodipicolinate binding. Catalysis depends on lysine 157, which acts as the Proton donor. 163 to 164 (GT) is a binding site for (S)-2,3,4,5-tetrahydrodipicolinate.

It belongs to the DapB family.

It is found in the cytoplasm. It carries out the reaction (S)-2,3,4,5-tetrahydrodipicolinate + NAD(+) + H2O = (2S,4S)-4-hydroxy-2,3,4,5-tetrahydrodipicolinate + NADH + H(+). It catalyses the reaction (S)-2,3,4,5-tetrahydrodipicolinate + NADP(+) + H2O = (2S,4S)-4-hydroxy-2,3,4,5-tetrahydrodipicolinate + NADPH + H(+). Its pathway is amino-acid biosynthesis; L-lysine biosynthesis via DAP pathway; (S)-tetrahydrodipicolinate from L-aspartate: step 4/4. In terms of biological role, catalyzes the conversion of 4-hydroxy-tetrahydrodipicolinate (HTPA) to tetrahydrodipicolinate. This chain is 4-hydroxy-tetrahydrodipicolinate reductase, found in Burkholderia lata (strain ATCC 17760 / DSM 23089 / LMG 22485 / NCIMB 9086 / R18194 / 383).